The following is a 447-amino-acid chain: ATP-dependent protease ATPase subunit HslU (447 aa).

ATP is bound by residues I17, 59–64 (GVGKTE), D256, E321, and R393.

The protein belongs to the ClpX chaperone family. HslU subfamily. A double ring-shaped homohexamer of HslV is capped on each side by a ring-shaped HslU homohexamer. The assembly of the HslU/HslV complex is dependent on binding of ATP.

It is found in the cytoplasm. ATPase subunit of a proteasome-like degradation complex; this subunit has chaperone activity. The binding of ATP and its subsequent hydrolysis by HslU are essential for unfolding of protein substrates subsequently hydrolyzed by HslV. HslU recognizes the N-terminal part of its protein substrates and unfolds these before they are guided to HslV for hydrolysis. This Pseudomonas putida (strain W619) protein is ATP-dependent protease ATPase subunit HslU.